The primary structure comprises 227 residues: KH domain-containing protein MJ0443 (227 aa).

KH domains lie at 14–77 (KSIE…RDIV) and 106–163 (DYAS…KEAV).

This chain is KH domain-containing protein MJ0443, found in Methanocaldococcus jannaschii (strain ATCC 43067 / DSM 2661 / JAL-1 / JCM 10045 / NBRC 100440) (Methanococcus jannaschii).